We begin with the raw amino-acid sequence, 411 residues long: LL-diaminopimelate aminotransferase (411 aa).

2 residues coordinate substrate: Tyr-15 and Gly-42. Residues Tyr-72, 108–109 (SK), Tyr-132, Asn-187, Tyr-218, and 246–248 (SFS) each bind pyridoxal 5'-phosphate. Positions 109, 132, and 187 each coordinate substrate. Lys-249 is modified (N6-(pyridoxal phosphate)lysine). Residues Arg-257 and Asn-292 each contribute to the pyridoxal 5'-phosphate site. Positions 292 and 388 each coordinate substrate.

It belongs to the class-I pyridoxal-phosphate-dependent aminotransferase family. LL-diaminopimelate aminotransferase subfamily. In terms of assembly, homodimer. Pyridoxal 5'-phosphate is required as a cofactor.

The catalysed reaction is (2S,6S)-2,6-diaminopimelate + 2-oxoglutarate = (S)-2,3,4,5-tetrahydrodipicolinate + L-glutamate + H2O + H(+). Its pathway is amino-acid biosynthesis; L-lysine biosynthesis via DAP pathway; LL-2,6-diaminopimelate from (S)-tetrahydrodipicolinate (aminotransferase route): step 1/1. Involved in the synthesis of meso-diaminopimelate (m-DAP or DL-DAP), required for both lysine and peptidoglycan biosynthesis. Catalyzes the direct conversion of tetrahydrodipicolinate to LL-diaminopimelate. The protein is LL-diaminopimelate aminotransferase of Cyanothece sp. (strain PCC 7425 / ATCC 29141).